Reading from the N-terminus, the 244-residue chain is Adenosine 5'-phosphosulfate reductase (244 aa).

[4Fe-4S] cluster is bound by residues C129, C130, C212, and C215. Catalysis depends on C240, which acts as the Nucleophile; cysteine thiosulfonate intermediate.

The protein belongs to the PAPS reductase family. CysH subfamily. Requires [4Fe-4S] cluster as cofactor.

It localises to the cytoplasm. It carries out the reaction [thioredoxin]-disulfide + sulfite + AMP + 2 H(+) = adenosine 5'-phosphosulfate + [thioredoxin]-dithiol. It functions in the pathway sulfur metabolism; hydrogen sulfide biosynthesis; sulfite from sulfate. In terms of biological role, catalyzes the formation of sulfite from adenosine 5'-phosphosulfate (APS) using thioredoxin as an electron donor. This is Adenosine 5'-phosphosulfate reductase from Neisseria meningitidis serogroup A / serotype 4A (strain DSM 15465 / Z2491).